The following is an 883-amino-acid chain: Protein P (883 aa).

Positions Met1–Gln183 are terminal protein domain (TP). The spacer stretch occupies residues Leu184 to Leu386. The interval Arg298–Ser344 is disordered. The interval Asp387–Gln728 is polymerase/reverse transcriptase domain (RT). Residues Asp397 to Ile638 form the Reverse transcriptase domain. Mg(2+)-binding residues include Asp469, Asp589, and Asp590.

The protein belongs to the hepadnaviridae P protein family.

It catalyses the reaction DNA(n) + a 2'-deoxyribonucleoside 5'-triphosphate = DNA(n+1) + diphosphate. The enzyme catalyses Endonucleolytic cleavage to 5'-phosphomonoester.. Its activity is regulated as follows. Activated by host HSP70 and HSP40 in vitro to be able to bind the epsilon loop of the pgRNA. Because deletion of the RNase H region renders the protein partly chaperone-independent, the chaperones may be needed indirectly to relieve occlusion of the RNA-binding site by this domain. Inhibited by several reverse-transcriptase inhibitors: Lamivudine, Adefovir and Entecavir. In terms of biological role, multifunctional enzyme that converts the viral RNA genome into dsDNA in viral cytoplasmic capsids. This enzyme displays a DNA polymerase activity that can copy either DNA or RNA templates, and a ribonuclease H (RNase H) activity that cleaves the RNA strand of RNA-DNA heteroduplexes in a partially processive 3'- to 5'-endonucleasic mode. Neo-synthesized pregenomic RNA (pgRNA) are encapsidated together with the P protein, and reverse-transcribed inside the nucleocapsid. Initiation of reverse-transcription occurs first by binding the epsilon loop on the pgRNA genome, and is initiated by protein priming, thereby the 5'-end of (-)DNA is covalently linked to P protein. Partial (+)DNA is synthesized from the (-)DNA template and generates the relaxed circular DNA (RC-DNA) genome. After budding and infection, the RC-DNA migrates in the nucleus, and is converted into a plasmid-like covalently closed circular DNA (cccDNA). The activity of P protein does not seem to be necessary for cccDNA generation, and is presumably released from (+)DNA by host nuclear DNA repair machinery. The sequence is that of Protein P from Woodchuck hepatitis B virus (isolate 2) (WHV).